A 188-amino-acid chain; its full sequence is Protein SSX4 (188 aa).

The KRAB-related domain occupies 20–83 (KLRKAFDDIA…KRAADFHGND (64 aa)). Over residues 116–127 (PAEEENGLKEVP) the composition is skewed to basic and acidic residues. A disordered region spans residues 116-167 (PAEEENGLKEVPEASGPQNDGKQLCPPGNPSTLEKINKTSGPKRGKHAWTHR). Residues 145-155 (PSTLEKINKTS) are compositionally biased toward polar residues. The span at 156 to 167 (GPKRGKHAWTHR) shows a compositional bias: basic residues.

This sequence belongs to the SSX family.

Could act as a modulator of transcription. In Homo sapiens (Human), this protein is Protein SSX4 (SSX4).